Here is a 335-residue protein sequence, read N- to C-terminus: Beta-ketoacyl-[acyl-carrier-protein] synthase III (335 aa).

Catalysis depends on residues C119 and H261. The interval 262-266 (QANQR) is ACP-binding. The active site involves N291.

This sequence belongs to the thiolase-like superfamily. FabH family. As to quaternary structure, homodimer.

The protein localises to the cytoplasm. The catalysed reaction is malonyl-[ACP] + acetyl-CoA + H(+) = 3-oxobutanoyl-[ACP] + CO2 + CoA. It participates in lipid metabolism; fatty acid biosynthesis. Its function is as follows. Catalyzes the condensation reaction of fatty acid synthesis by the addition to an acyl acceptor of two carbons from malonyl-ACP. Catalyzes the first condensation reaction which initiates fatty acid synthesis and may therefore play a role in governing the total rate of fatty acid production. Possesses both acetoacetyl-ACP synthase and acetyl transacylase activities. Its substrate specificity determines the biosynthesis of branched-chain and/or straight-chain of fatty acids. This is Beta-ketoacyl-[acyl-carrier-protein] synthase III from Prochlorococcus marinus (strain MIT 9215).